Reading from the N-terminus, the 100-residue chain is Large ribosomal subunit protein uL23 (100 aa).

The protein belongs to the universal ribosomal protein uL23 family. Part of the 50S ribosomal subunit. Contacts protein L29, and trigger factor when it is bound to the ribosome.

Functionally, one of the early assembly proteins it binds 23S rRNA. One of the proteins that surrounds the polypeptide exit tunnel on the outside of the ribosome. Forms the main docking site for trigger factor binding to the ribosome. The sequence is that of Large ribosomal subunit protein uL23 from Prochlorococcus marinus (strain AS9601).